A 716-amino-acid polypeptide reads, in one-letter code: Splicing factor Cactin (716 aa).

The interval 1-104 (MGSHGKGKRD…SKKAQKKALR (104 aa)) is disordered. Residues 10–22 (DRSGRQKKRRDES) show a composition bias toward basic and acidic residues. Low complexity predominate over residues 25–45 (GSESESYTSDSDGSDDLSPPR). A compositionally biased stretch (basic residues) spans 46-61 (SSRRKKGSSSRRTRRR). The span at 81 to 95 (SSKDYSEEKVTEYMS) shows a compositional bias: basic and acidic residues. Residues 153 to 201 (SVKAEKRRHRERMTEVEKVKKRREERAVEKARHEEEMALLARERARAEF) are a coiled coil. A Phosphoserine modification is found at S450. The interval 466–525 (VEENEEEINDTNLSDAEEAFSPEPVAEEEEADEAAEAAGSFSPELMHGDDREEAIDPEED) is disordered. A compositionally biased stretch (acidic residues) spans 468-500 (ENEEEINDTNLSDAEEAFSPEPVAEEEEADEAA).

Belongs to the CACTIN family. Interacts with At5g63440.

It is found in the nucleus speckle. Functionally, plays a role in pre-mRNA splicing by facilitating excision of a subset of introns. Required for embryogenesis. In Arabidopsis thaliana (Mouse-ear cress), this protein is Splicing factor Cactin (CTN).